The primary structure comprises 194 residues: Probable chorismate pyruvate-lyase (194 aa).

Positions 77, 115, and 176 each coordinate substrate.

The protein belongs to the UbiC family.

It is found in the cytoplasm. The enzyme catalyses chorismate = 4-hydroxybenzoate + pyruvate. It functions in the pathway cofactor biosynthesis; ubiquinone biosynthesis. Functionally, removes the pyruvyl group from chorismate, with concomitant aromatization of the ring, to provide 4-hydroxybenzoate (4HB) for the ubiquinone pathway. In Cupriavidus pinatubonensis (strain JMP 134 / LMG 1197) (Cupriavidus necator (strain JMP 134)), this protein is Probable chorismate pyruvate-lyase.